The following is a 92-amino-acid chain: Small ribosomal subunit protein uS19 (92 aa).

The protein belongs to the universal ribosomal protein uS19 family.

Its function is as follows. Protein S19 forms a complex with S13 that binds strongly to the 16S ribosomal RNA. The chain is Small ribosomal subunit protein uS19 from Orientia tsutsugamushi (strain Boryong) (Rickettsia tsutsugamushi).